Here is a 496-residue protein sequence, read N- to C-terminus: Maturase K (496 aa).

This sequence belongs to the intron maturase 2 family. MatK subfamily.

The protein localises to the plastid. It is found in the chloroplast. Its function is as follows. Usually encoded in the trnK tRNA gene intron. Probably assists in splicing its own and other chloroplast group II introns. The sequence is that of Maturase K from Paeonia suffruticosa (Tree peony).